The primary structure comprises 299 residues: MALLIITTILWAFSFSFYGEYLAGHVDSYFAVLVRVGLAALVFLPFLRTRGNSLKTVGLYMLVGAMQLGVMYMLSFRAYLYLTVSELLLFTVLTPLYITLIYDIMSKRRLRWGYAFSALLAVIGAGIIRYDQVTDHFWTGLLLVQLSNITFAIGMVGYKRLMETRPMPQHNAFAWFYLGAFLVAVIAWFLLGNAQKMPQTTLQWGILVFLGVVASGIGYFMWNYGATQVDAGTLGIMNNMHVPAGLLVNLAIWHQQPHWPTFITGALVILASLWVHRKWVAPRSSQTADDRRRDCALSE.

10 consecutive transmembrane segments (helical) span residues 2 to 22 (ALLI…GEYL), 26 to 46 (VDSY…FLPF), 56 to 76 (TVGL…MLSF), 81 to 101 (YLTV…ITLI), 110 to 130 (LRWG…IIRY), 137 to 157 (FWTG…GMVG), 172 to 192 (AFAW…FLLG), 202 to 222 (LQWG…YFMW), 233 to 253 (TLGI…LAIW), and 256 to 276 (QPHW…LWVH). 2 consecutive EamA domains span residues 3–128 (LLII…AGII) and 139–274 (TGLL…ASLW).

This sequence belongs to the drug/metabolite transporter (DMT) superfamily. 10 TMS drug/metabolite exporter (DME) (TC 2.A.7.3) family.

The protein localises to the cell inner membrane. The enzyme catalyses biotin(in) = biotin(out). Uptake of biotin. In Escherichia coli O157:H7, this protein is Biotin transporter.